Here is a 109-residue protein sequence, read N- to C-terminus: Large ribosomal subunit protein P1 (109 aa).

Positions 90 to 109 (AAAKKEEEEEDDDMGFGLFD) are disordered.

This sequence belongs to the eukaryotic ribosomal protein P1/P2 family. In terms of assembly, P1 and P2 exist as dimers at the large ribosomal subunit.

In terms of biological role, plays an important role in the elongation step of protein synthesis. The protein is Large ribosomal subunit protein P1 of Trypanosoma cruzi.